The following is a 387-amino-acid chain: 3-ketoacyl-CoA thiolase (387 aa).

Residue C91 is the Acyl-thioester intermediate of the active site. Residues H343 and C373 each act as proton acceptor in the active site.

Belongs to the thiolase-like superfamily. Thiolase family. Heterotetramer of two alpha chains (FadB) and two beta chains (FadA).

It localises to the cytoplasm. The enzyme catalyses an acyl-CoA + acetyl-CoA = a 3-oxoacyl-CoA + CoA. It functions in the pathway lipid metabolism; fatty acid beta-oxidation. Its function is as follows. Catalyzes the final step of fatty acid oxidation in which acetyl-CoA is released and the CoA ester of a fatty acid two carbons shorter is formed. The protein is 3-ketoacyl-CoA thiolase of Klebsiella pneumoniae subsp. pneumoniae (strain ATCC 700721 / MGH 78578).